We begin with the raw amino-acid sequence, 204 residues long: ATP-dependent Clp protease proteolytic subunit (204 aa).

The active-site Nucleophile is S102. H127 is an active-site residue.

Belongs to the peptidase S14 family. In terms of assembly, fourteen ClpP subunits assemble into 2 heptameric rings which stack back to back to give a disk-like structure with a central cavity, resembling the structure of eukaryotic proteasomes.

Its subcellular location is the cytoplasm. The enzyme catalyses Hydrolysis of proteins to small peptides in the presence of ATP and magnesium. alpha-casein is the usual test substrate. In the absence of ATP, only oligopeptides shorter than five residues are hydrolyzed (such as succinyl-Leu-Tyr-|-NHMec, and Leu-Tyr-Leu-|-Tyr-Trp, in which cleavage of the -Tyr-|-Leu- and -Tyr-|-Trp bonds also occurs).. Its function is as follows. Cleaves peptides in various proteins in a process that requires ATP hydrolysis. Has a chymotrypsin-like activity. Plays a major role in the degradation of misfolded proteins. The protein is ATP-dependent Clp protease proteolytic subunit of Neisseria meningitidis serogroup A / serotype 4A (strain DSM 15465 / Z2491).